Reading from the N-terminus, the 229-residue chain is Prolactin (229 aa).

Residues 1–30 form the signal peptide; it reads MDKKGWSLKGSLLPLLLLVSDLLLCQSVAS. Cys-34 and Cys-41 are joined by a disulfide. A phosphoserine mark is found at Ser-56, Ser-64, and Ser-120. Intrachain disulfides connect Cys-88/Cys-204 and Cys-221/Cys-229.

Belongs to the somatotropin/prolactin family. In terms of assembly, interacts with PRLR.

The protein localises to the secreted. In terms of biological role, prolactin acts primarily on the mammary gland by promoting lactation. The protein is Prolactin (PRL) of Ailuropoda melanoleuca (Giant panda).